An 86-amino-acid chain; its full sequence is Large ribosomal subunit protein bL31 (86 aa).

Positions 65–86 (YGMGSADSATSKETKESKKSDK) are disordered. The span at 74 to 86 (TSKETKESKKSDK) shows a compositional bias: basic and acidic residues.

Belongs to the bacterial ribosomal protein bL31 family. Type A subfamily. As to quaternary structure, part of the 50S ribosomal subunit.

Its function is as follows. Binds the 23S rRNA. This is Large ribosomal subunit protein bL31 from Prochlorococcus marinus subsp. pastoris (strain CCMP1986 / NIES-2087 / MED4).